A 366-amino-acid polypeptide reads, in one-letter code: tRNA 2-selenouridine synthase (366 aa).

The region spanning 14–137 (LLENRPLIDV…IRSFLINTIE (124 aa)) is the Rhodanese domain. Cysteine 97 functions as the S-selanylcysteine intermediate in the catalytic mechanism.

Belongs to the SelU family. In terms of assembly, monomer.

It carries out the reaction 5-methylaminomethyl-2-thiouridine(34) in tRNA + selenophosphate + (2E)-geranyl diphosphate + H2O + H(+) = 5-methylaminomethyl-2-selenouridine(34) in tRNA + (2E)-thiogeraniol + phosphate + diphosphate. The enzyme catalyses 5-methylaminomethyl-2-thiouridine(34) in tRNA + (2E)-geranyl diphosphate = 5-methylaminomethyl-S-(2E)-geranyl-thiouridine(34) in tRNA + diphosphate. It catalyses the reaction 5-methylaminomethyl-S-(2E)-geranyl-thiouridine(34) in tRNA + selenophosphate + H(+) = 5-methylaminomethyl-2-(Se-phospho)selenouridine(34) in tRNA + (2E)-thiogeraniol. The catalysed reaction is 5-methylaminomethyl-2-(Se-phospho)selenouridine(34) in tRNA + H2O = 5-methylaminomethyl-2-selenouridine(34) in tRNA + phosphate. Its function is as follows. Involved in the post-transcriptional modification of the uridine at the wobble position (U34) of tRNA(Lys), tRNA(Glu) and tRNA(Gln). Catalyzes the conversion of 2-thiouridine (S2U-RNA) to 2-selenouridine (Se2U-RNA). Acts in a two-step process involving geranylation of 2-thiouridine (S2U) to S-geranyl-2-thiouridine (geS2U) and subsequent selenation of the latter derivative to 2-selenouridine (Se2U) in the tRNA chain. This is tRNA 2-selenouridine synthase from Shewanella frigidimarina (strain NCIMB 400).